We begin with the raw amino-acid sequence, 505 residues long: Maturase K (505 aa).

The protein belongs to the intron maturase 2 family. MatK subfamily.

It localises to the plastid. Its subcellular location is the chloroplast. Functionally, usually encoded in the trnK tRNA gene intron. Probably assists in splicing its own and other chloroplast group II introns. This Allamanda cathartica (Yellow allamanda) protein is Maturase K.